A 451-amino-acid polypeptide reads, in one-letter code: MSNVIENLGKLDRKVTLAIPKAEVEKEKQERLVRLSKTVKMSGFRPGKVPMKMVEKQYGQQVEFEVRFDKAARKFFDITKEQDVKVAGQPKFEIKNEGVGEDEVAFDATFEVYPEVTIGDLSAAEVTRTSTEITDAEVDKTIDILRKQRVHYHARGESGEHGDGGADVTAQNGDRVTVDFVGKIDGVEFAGGKAEDFPFVLGEGRMLPEFEQATLGLKVGESKTFPLAFPADYHGKEVAGKTAEFTVTLKKVEWAHLPEVNEAFAKSLGIADGSVEKMRADIRENLEREVKRRTHAMLKDQVMEALLKASELDVPKALIEQDQERLVEMARRDLEQRGMPNAKDMPIPAEMFAQQAERRVKLGLILAEIVKANGLEAKADQIKAEIEDFAKSYEDPKEVMRWYYGDQQRLAEMEAYVLENNVVNFVCDKAKVTDKKVSFEELTAEGNAQQA.

Residues 173-258 (GDRVTVDFVG…LKKVEWAHLP (86 aa)) enclose the PPIase FKBP-type domain.

It belongs to the FKBP-type PPIase family. Tig subfamily.

Its subcellular location is the cytoplasm. The catalysed reaction is [protein]-peptidylproline (omega=180) = [protein]-peptidylproline (omega=0). Functionally, involved in protein export. Acts as a chaperone by maintaining the newly synthesized protein in an open conformation. Functions as a peptidyl-prolyl cis-trans isomerase. The polypeptide is Trigger factor (Cupriavidus taiwanensis (strain DSM 17343 / BCRC 17206 / CCUG 44338 / CIP 107171 / LMG 19424 / R1) (Ralstonia taiwanensis (strain LMG 19424))).